The sequence spans 264 residues: Glutamate 5-kinase (264 aa).

Residue lysine 15 coordinates ATP. Substrate contacts are provided by serine 55, aspartate 142, and asparagine 154. ATP contacts are provided by residues 174-175 (SD) and 216-222 (TGGIATK).

This sequence belongs to the glutamate 5-kinase family.

The protein localises to the cytoplasm. It carries out the reaction L-glutamate + ATP = L-glutamyl 5-phosphate + ADP. The protein operates within amino-acid biosynthesis; L-proline biosynthesis; L-glutamate 5-semialdehyde from L-glutamate: step 1/2. Catalyzes the transfer of a phosphate group to glutamate to form L-glutamate 5-phosphate. This Alkaliphilus metalliredigens (strain QYMF) protein is Glutamate 5-kinase.